The sequence spans 350 residues: Protein SGT1 homolog A (350 aa).

TPR repeat units follow at residues 2 to 35 (AKELADKAKEAFVDDDFDVAVDLYSKAIDLDPNC), 37 to 69 (EFFADRAQAYIKLESFTEAVADANKAIELDPSL), and 71 to 103 (KAYLRKGTACMKLEEYRTAKTALEKGASITPSE). Residues 149–238 (TAKYRHEYYQ…ADIITWASLE (90 aa)) enclose the CS domain. Residues 260 to 350 (AYPSSKKVKD…DGMELKKWEI (91 aa)) enclose the SGS domain.

It belongs to the SGT1 family. Interacts with RAR1. Forms a ternary complex with RAR1 and barley HSP90.

Its function is as follows. Functions in R gene-mediated resistance, but participates in a lower extent than SGT1B to RPP5-mediated resistance. Not required for RPM1, RPS2, RPS4 and RPS5-mediated resistance. Probably required for SCF-mediated ubiquitination, by coupling HSP90 to SCF complex for ubiquitination of HSP90 client proteins. The chain is Protein SGT1 homolog A (SGT1A) from Arabidopsis thaliana (Mouse-ear cress).